A 433-amino-acid chain; its full sequence is Trigger factor (433 aa).

The 86-residue stretch at E161 to P246 folds into the PPIase FKBP-type domain.

It belongs to the FKBP-type PPIase family. Tig subfamily.

Its subcellular location is the cytoplasm. It catalyses the reaction [protein]-peptidylproline (omega=180) = [protein]-peptidylproline (omega=0). Involved in protein export. Acts as a chaperone by maintaining the newly synthesized protein in an open conformation. Functions as a peptidyl-prolyl cis-trans isomerase. This is Trigger factor from Actinobacillus pleuropneumoniae serotype 7 (strain AP76).